The following is a 276-amino-acid chain: Non-heme chloroperoxidase (276 aa).

Residues proline 24 to leucine 254 form the AB hydrolase-1 domain. Residues serine 97, aspartate 227, and histidine 256 contribute to the active site.

The protein belongs to the AB hydrolase superfamily. Bacterial non-heme haloperoxidase / perhydrolase family. Homodimer.

The polypeptide is Non-heme chloroperoxidase (cpo) (Streptomyces lividans).